The sequence spans 181 residues: Oligoribonuclease (181 aa).

The Exonuclease domain maps to 8–171 (LIWVDLEMTG…DDIRESIAEL (164 aa)). Tyr-129 is an active-site residue.

The protein belongs to the oligoribonuclease family.

The protein localises to the cytoplasm. 3'-to-5' exoribonuclease specific for small oligoribonucleotides. This Aliivibrio fischeri (strain ATCC 700601 / ES114) (Vibrio fischeri) protein is Oligoribonuclease.